Reading from the N-terminus, the 336-residue chain is Myb family transcription factor PHL8 (336 aa).

Positions 31–91 (TDAKPRLKWT…HLQKYRLGKS (61 aa)) constitute an HTH myb-type domain. The H-T-H motif DNA-binding region spans 62–87 (PKGLMKVMEIPGLTLYHLKSHLQKYR). Positions 100-134 (EVSSASENQEVESKNDSRDLRGCSVTEENSNPAKE) are disordered. Basic and acidic residues predominate over residues 110–120 (VESKNDSRDLR). The stretch at 139-159 (TEALQMQMEVQKKLHEQIEVQ) forms a coiled coil. Positions 152-157 (LHEQIE) match the LHEQLE motif.

This sequence belongs to the MYB-CC family.

The protein resides in the nucleus. In Arabidopsis thaliana (Mouse-ear cress), this protein is Myb family transcription factor PHL8.